The primary structure comprises 426 residues: Tetracenomycin polyketide synthase ketoacyl synthase alpha subunit (426 aa).

The Ketosynthase family 3 (KS3) domain occupies 6-420 (EKRVVITGIG…GFQSAAVLAR (415 aa)). Catalysis depends on for beta-ketoacyl synthase activity residues Cys-173, His-313, and His-350.

This sequence belongs to the thiolase-like superfamily. Beta-ketoacyl-ACP synthases family. As to quaternary structure, the tetracenomycin polyketide synthase (TCM PKS) is composed of a ketosynthase complex (TcmKL), an acyl carrier protein (TcmM), a cyclase (TcmN) and a probable second cyclase (TcmJ). TcmK and TcmL form a heterodimeric complex.

The catalysed reaction is 10 malonyl-CoA + 8 H(+) = tetracenomycin F2 + 10 CO2 + 10 CoA + 2 H2O. The protein operates within antibiotic biosynthesis; tetracenomycin C biosynthesis. In terms of biological role, involved in the biosynthesis of tetracenomycin C (TCM C). Part of a type II polyketide synthase (PKS) that catalyzes the synthesis of tetracenomycin F2 (TCM F2), a precursor of TCM C, from malonyl-CoA. TcmK and TcmL form a heterodimeric alpha-beta complex that catalyzes the condensation reactions between the growing acyl-enzyme chain and the malonyl-CoA extender units. The protein is Tetracenomycin polyketide synthase ketoacyl synthase alpha subunit of Streptomyces glaucescens.